A 393-amino-acid chain; its full sequence is Acetylornithine aminotransferase (393 aa).

Residues G95–A96 and F127 contribute to the pyridoxal 5'-phosphate site. A N(2)-acetyl-L-ornithine-binding site is contributed by R130. A pyridoxal 5'-phosphate-binding site is contributed by D214–Q217. K243 is modified (N6-(pyridoxal phosphate)lysine). Residue S271 participates in N(2)-acetyl-L-ornithine binding. Pyridoxal 5'-phosphate is bound at residue T272.

Belongs to the class-III pyridoxal-phosphate-dependent aminotransferase family. ArgD subfamily. Homodimer. Requires pyridoxal 5'-phosphate as cofactor.

It is found in the cytoplasm. The enzyme catalyses N(2)-acetyl-L-ornithine + 2-oxoglutarate = N-acetyl-L-glutamate 5-semialdehyde + L-glutamate. Its pathway is amino-acid biosynthesis; L-arginine biosynthesis; N(2)-acetyl-L-ornithine from L-glutamate: step 4/4. This chain is Acetylornithine aminotransferase, found in Nitrosomonas europaea (strain ATCC 19718 / CIP 103999 / KCTC 2705 / NBRC 14298).